The chain runs to 313 residues: Ribosomal RNA small subunit methyltransferase H (313 aa).

Residues 35 to 37, Asp55, Phe79, Asp100, and Gln107 each bind S-adenosyl-L-methionine; that span reads GGH.

Belongs to the methyltransferase superfamily. RsmH family.

It is found in the cytoplasm. It catalyses the reaction cytidine(1402) in 16S rRNA + S-adenosyl-L-methionine = N(4)-methylcytidine(1402) in 16S rRNA + S-adenosyl-L-homocysteine + H(+). Its function is as follows. Specifically methylates the N4 position of cytidine in position 1402 (C1402) of 16S rRNA. The polypeptide is Ribosomal RNA small subunit methyltransferase H (Burkholderia ambifaria (strain ATCC BAA-244 / DSM 16087 / CCUG 44356 / LMG 19182 / AMMD) (Burkholderia cepacia (strain AMMD))).